A 400-amino-acid polypeptide reads, in one-letter code: NADH-ubiquinone oxidoreductase 49 kDa subunit (400 aa).

It belongs to the complex I 49 kDa subunit family.

Its subcellular location is the mitochondrion. The enzyme catalyses a ubiquinone + NADH + 5 H(+)(in) = a ubiquinol + NAD(+) + 4 H(+)(out). Functionally, core subunit of the mitochondrial membrane respiratory chain NADH dehydrogenase (Complex I) that is believed to belong to the minimal assembly required for catalysis. Complex I functions in the transfer of electrons from NADH to the respiratory chain. The immediate electron acceptor for the enzyme is believed to be ubiquinone. Component of the iron-sulfur (IP) fragment of the enzyme. Component of the iron-sulfur (IP) fragment of the enzyme. The polypeptide is NADH-ubiquinone oxidoreductase 49 kDa subunit (NAD7) (Prototheca wickerhamii).